Reading from the N-terminus, the 429-residue chain is Phosphoglucosamine mutase (429 aa).

Ser-96 acts as the Phosphoserine intermediate in catalysis. The Mg(2+) site is built by Ser-96, Asp-230, Asp-232, and Asp-234. Residue Ser-96 is modified to Phosphoserine.

The protein belongs to the phosphohexose mutase family. Mg(2+) is required as a cofactor. Activated by phosphorylation.

The catalysed reaction is alpha-D-glucosamine 1-phosphate = D-glucosamine 6-phosphate. Functionally, catalyzes the conversion of glucosamine-6-phosphate to glucosamine-1-phosphate. The polypeptide is Phosphoglucosamine mutase (Thermotoga maritima (strain ATCC 43589 / DSM 3109 / JCM 10099 / NBRC 100826 / MSB8)).